The chain runs to 365 residues: 3,4-dihydroxy-2-butanone 4-phosphate synthase (365 aa).

The segment at 1–201 is DHBP synthase; sequence MALNTIDELI…IADLIHYRLI (201 aa). Residues 27-28, aspartate 32, 140-144, and glutamate 164 each bind D-ribulose 5-phosphate; these read RE and RAGHT. Residue glutamate 28 coordinates Mg(2+). Histidine 143 is a Mg(2+) binding site. Positions 202–365 are GTP cyclohydrolase II-like; the sequence is HERTVERIAE…LEVVEYLPAE (164 aa).

This sequence in the N-terminal section; belongs to the DHBP synthase family. It in the C-terminal section; belongs to the GTP cyclohydrolase II family. Requires Mg(2+) as cofactor. Mn(2+) serves as cofactor.

The enzyme catalyses D-ribulose 5-phosphate = (2S)-2-hydroxy-3-oxobutyl phosphate + formate + H(+). Its pathway is cofactor biosynthesis; riboflavin biosynthesis; 2-hydroxy-3-oxobutyl phosphate from D-ribulose 5-phosphate: step 1/1. Its function is as follows. Catalyzes the conversion of D-ribulose 5-phosphate to formate and 3,4-dihydroxy-2-butanone 4-phosphate. This Pseudomonas aeruginosa (strain ATCC 15692 / DSM 22644 / CIP 104116 / JCM 14847 / LMG 12228 / 1C / PRS 101 / PAO1) protein is 3,4-dihydroxy-2-butanone 4-phosphate synthase (ribB).